The sequence spans 175 residues: ATP-dependent protease subunit HslV (175 aa).

Thr2 is an active-site residue. Residues Gly158, Cys161, and Thr164 each contribute to the Na(+) site.

It belongs to the peptidase T1B family. HslV subfamily. In terms of assembly, a double ring-shaped homohexamer of HslV is capped on each side by a ring-shaped HslU homohexamer. The assembly of the HslU/HslV complex is dependent on binding of ATP.

The protein resides in the cytoplasm. It catalyses the reaction ATP-dependent cleavage of peptide bonds with broad specificity.. Allosterically activated by HslU binding. Its function is as follows. Protease subunit of a proteasome-like degradation complex believed to be a general protein degrading machinery. The protein is ATP-dependent protease subunit HslV of Haemophilus influenzae (strain ATCC 51907 / DSM 11121 / KW20 / Rd).